The chain runs to 274 residues: Bis(5'-nucleosyl)-tetraphosphatase, symmetrical (274 aa).

This sequence belongs to the Ap4A hydrolase family.

It carries out the reaction P(1),P(4)-bis(5'-adenosyl) tetraphosphate + H2O = 2 ADP + 2 H(+). Hydrolyzes diadenosine 5',5'''-P1,P4-tetraphosphate to yield ADP. The chain is Bis(5'-nucleosyl)-tetraphosphatase, symmetrical from Shewanella sp. (strain W3-18-1).